We begin with the raw amino-acid sequence, 88 residues long: Apolipoprotein C-I (88 aa).

A signal peptide spans 1–26; it reads MRLFLSLPVLVVVLAMVWEGPAPTQA.

It belongs to the apolipoprotein C1 family.

The protein resides in the secreted. In terms of biological role, inhibitor of lipoprotein binding to the low density lipoprotein (LDL) receptor, LDL receptor-related protein, and very low density lipoprotein (VLDL) receptor. Associates with high density lipoproteins (HDL) and the triacylglycerol-rich lipoproteins in the plasma and makes up about 10% of the protein of the VLDL and 2% of that of HDL. Appears to interfere directly with fatty acid uptake and is also the major plasma inhibitor of cholesteryl ester transfer protein (CETP). Binds free fatty acids and reduces their intracellular esterification. Modulates the interaction of APOE with beta-migrating VLDL and inhibits binding of beta-VLDL to the LDL receptor-related protein. The protein is Apolipoprotein C-I (APOC1) of Neomonachus schauinslandi (Hawaiian monk seal).